Consider the following 1126-residue polypeptide: MLDTESRWAIAESFFKTRGLVRQHLDSFNDFLRNKLQQVIYEQGEIVTEVPGLKIKLGKIRYEKPSIRETDKGPMREITPMEARLRNLTYSSPIFLSMIPVENNIEGEPIEIYIGDLPIMLKSVADPTSNLPIDKLIEIGEDPKDPGGYFIVNGSEKVIIAQEDLATNRVLVDYGKSGSNITHVAKVTSSAAGYRVQVMIERLKDSTIQISFATVPGRIPFAIIMRALGFVTDRDIVYAVSLDPQIQNELLPSLEQASSITSAEEALDFIGNRVAIGQKRENRIQKAEQVIDKYFLPHLGTSPEDRKKKGYYLASAVNKILELYLGRREPDDKDHYANKRVRLAGDLFTSLFRVAFKAFVKDLVYQLEKSKVRGRRLSLTALVRADIITERIRHALATGNWVGGRTGVSQLLDRTNWLSMLSHLRRVVSSLARGQPNFEARDLHGTQWGRMCPFETPEGPNSGLVKNLALLAQVSVGINESVVERVAYELGVVSVEDVIRRISEQNEDVEKYMSWSKVYLNGRLLGYYEDGKELAKKIRESRRQGKLSDEVNVAYIATDYLNEVHINCDAGRVRRPLIIVNNGTPLVDTEDIKKLKNGEITFDDLVKQGKIEFIDAEEEENAYVALNPQDLTPDHTHLEIWPSAILGIIASIIPYPEHNQSPRNTYQSAMAKQSLGLYASNYQIRTDTRAHLLHYPQMPLVQTRMLGVIGYNDRPAGANAILAIMSYTGYNMEDSIIMNKSSIERGMYRSTFFRLYSTEEVKYPGGQEDKIVTPEAGVKGYKGKDYYRLLEDNGVVSPEVEVKGGDVLIGKVSPPRFLQEFKELSPEQAKRDTSIVTRHGENGIVDLVLITETLEGNKLVKVRVRDLRIPEIGDKFATRHGQKGVVGILIDQVDMPYTAKGIVPDIILNPHALPSRMTIGQIMEAIGGKYAALSGKPVDATPFLETPKLQEMQKEILKLGHLPDSTEVVYDGRTGQKLKSRILFGIVYYQKLHHMVADKMHARARGPVQILTRQPTEGRAREGGLRFGEMERDCLIGFGTAMLIKDRLLDNSDKAVVYICDQCGYVGWYDRSKNRYVCPVHGDKSVLHPVTVSYAFKLLIQELMSMVISPRLILGEKVNLGGASNE.

4 residues coordinate Zn(2+): cysteine 1060, cysteine 1063, cysteine 1078, and histidine 1081.

This sequence belongs to the RNA polymerase beta chain family. Part of the 13-subunit RNA polymerase complex. Interacts with TFS4. In terms of assembly, (Microbial infection) Binds viral protein RIP which blocks global transcription. Zn(2+) is required as a cofactor.

The protein resides in the cytoplasm. The enzyme catalyses RNA(n) + a ribonucleoside 5'-triphosphate = RNA(n+1) + diphosphate. In terms of biological role, DNA-dependent RNA polymerase (RNAP) catalyzes the transcription of DNA into RNA using the four ribonucleoside triphosphates as substrates. This subunit is involved in DNA promoter recognition. In Sulfolobus acidocaldarius (strain ATCC 33909 / DSM 639 / JCM 8929 / NBRC 15157 / NCIMB 11770), this protein is DNA-directed RNA polymerase subunit Rpo2.